Reading from the N-terminus, the 208-residue chain is Holliday junction branch migration complex subunit RuvA (208 aa).

Residues Met1 to Arg64 form a domain I region. A domain II region spans residues Ser65–Val143. The segment at Ala144–Arg152 is flexible linker. Residues Thr153–Arg208 are domain III.

Belongs to the RuvA family. Homotetramer. Forms an RuvA(8)-RuvB(12)-Holliday junction (HJ) complex. HJ DNA is sandwiched between 2 RuvA tetramers; dsDNA enters through RuvA and exits via RuvB. An RuvB hexamer assembles on each DNA strand where it exits the tetramer. Each RuvB hexamer is contacted by two RuvA subunits (via domain III) on 2 adjacent RuvB subunits; this complex drives branch migration. In the full resolvosome a probable DNA-RuvA(4)-RuvB(12)-RuvC(2) complex forms which resolves the HJ.

The protein resides in the cytoplasm. Functionally, the RuvA-RuvB-RuvC complex processes Holliday junction (HJ) DNA during genetic recombination and DNA repair, while the RuvA-RuvB complex plays an important role in the rescue of blocked DNA replication forks via replication fork reversal (RFR). RuvA specifically binds to HJ cruciform DNA, conferring on it an open structure. The RuvB hexamer acts as an ATP-dependent pump, pulling dsDNA into and through the RuvAB complex. HJ branch migration allows RuvC to scan DNA until it finds its consensus sequence, where it cleaves and resolves the cruciform DNA. The protein is Holliday junction branch migration complex subunit RuvA of Methylorubrum populi (strain ATCC BAA-705 / NCIMB 13946 / BJ001) (Methylobacterium populi).